Consider the following 176-residue polypeptide: 2-C-methyl-D-erythritol 2,4-cyclodiphosphate synthase (176 aa).

Positions 22 and 24 each coordinate a divalent metal cation. Residues 22–24 (DVH) and 48–49 (HS) contribute to the 4-CDP-2-C-methyl-D-erythritol 2-phosphate site. His56 contributes to the a divalent metal cation binding site. 4-CDP-2-C-methyl-D-erythritol 2-phosphate is bound by residues 70 to 72 (DIG), 146 to 149 (TTSE), Phe153, and Arg156.

Belongs to the IspF family. As to quaternary structure, homotrimer. A divalent metal cation serves as cofactor.

The catalysed reaction is 4-CDP-2-C-methyl-D-erythritol 2-phosphate = 2-C-methyl-D-erythritol 2,4-cyclic diphosphate + CMP. Its pathway is isoprenoid biosynthesis; isopentenyl diphosphate biosynthesis via DXP pathway; isopentenyl diphosphate from 1-deoxy-D-xylulose 5-phosphate: step 4/6. In terms of biological role, involved in the biosynthesis of isopentenyl diphosphate (IPP) and dimethylallyl diphosphate (DMAPP), two major building blocks of isoprenoid compounds. Catalyzes the conversion of 4-diphosphocytidyl-2-C-methyl-D-erythritol 2-phosphate (CDP-ME2P) to 2-C-methyl-D-erythritol 2,4-cyclodiphosphate (ME-CPP) with a corresponding release of cytidine 5-monophosphate (CMP). This is 2-C-methyl-D-erythritol 2,4-cyclodiphosphate synthase from Xylella fastidiosa (strain 9a5c).